Consider the following 126-residue polypeptide: Arginine decarboxylase proenzyme (126 aa).

S74 serves as the catalytic Schiff-base intermediate with substrate; via pyruvic acid. S74 bears the Pyruvic acid (Ser); by autocatalysis mark. Residue H79 is the Proton acceptor; for processing activity of the active site. C94 (proton donor; for catalytic activity) is an active-site residue.

The protein belongs to the prokaryotic AdoMetDC family. Type 1 subfamily. Heterooctamer of four alpha and four beta chains arranged as a tetramer of alpha/beta heterodimers. Requires pyruvate as cofactor. Is synthesized initially as an inactive proenzyme. Formation of the active enzyme involves a self-maturation process in which the active site pyruvoyl group is generated from an internal serine residue via an autocatalytic post-translational modification. Two non-identical subunits are generated from the proenzyme in this reaction, and the pyruvate is formed at the N-terminus of the alpha chain, which is derived from the carboxyl end of the proenzyme. The post-translation cleavage follows an unusual pathway, termed non-hydrolytic serinolysis, in which the side chain hydroxyl group of the serine supplies its oxygen atom to form the C-terminus of the beta chain, while the remainder of the serine residue undergoes an oxidative deamination to produce ammonia and the pyruvoyl group blocking the N-terminus of the alpha chain.

The catalysed reaction is L-arginine + H(+) = agmatine + CO2. Its pathway is amine and polyamine biosynthesis; agmatine biosynthesis; agmatine from L-arginine: step 1/1. Functionally, specifically catalyzes the decarboxylation of L-arginine to agmatine. Has no S-adenosylmethionine decarboxylase (AdoMetDC) activity. The chain is Arginine decarboxylase proenzyme from Pyrobaculum neutrophilum (strain DSM 2338 / JCM 9278 / NBRC 100436 / V24Sta) (Thermoproteus neutrophilus).